The following is a 429-amino-acid chain: Trigger factor (429 aa).

Residues 164–249 form the PPIase FKBP-type domain; that stretch reads GDWAVIDHEG…LKALKVRQAP (86 aa).

This sequence belongs to the FKBP-type PPIase family. Tig subfamily.

It is found in the cytoplasm. It carries out the reaction [protein]-peptidylproline (omega=180) = [protein]-peptidylproline (omega=0). In terms of biological role, involved in protein export. Acts as a chaperone by maintaining the newly synthesized protein in an open conformation. Functions as a peptidyl-prolyl cis-trans isomerase. The protein is Trigger factor of Anaeromyxobacter dehalogenans (strain 2CP-C).